The chain runs to 271 residues: NADPH-dependent 7-cyano-7-deazaguanine reductase (271 aa).

Position 81-83 (81-83 (IES)) interacts with substrate. 83-84 (SK) lines the NADPH pocket. Cys-177 (thioimide intermediate) is an active-site residue. The Proton donor role is filled by Asp-184. 216-217 (HE) is a substrate binding site. Residue 245 to 246 (RG) participates in NADPH binding.

It belongs to the GTP cyclohydrolase I family. QueF type 2 subfamily. As to quaternary structure, homodimer.

Its subcellular location is the cytoplasm. The enzyme catalyses 7-aminomethyl-7-carbaguanine + 2 NADP(+) = 7-cyano-7-deazaguanine + 2 NADPH + 3 H(+). Its pathway is tRNA modification; tRNA-queuosine biosynthesis. Catalyzes the NADPH-dependent reduction of 7-cyano-7-deazaguanine (preQ0) to 7-aminomethyl-7-deazaguanine (preQ1). In Xanthomonas axonopodis pv. citri (strain 306), this protein is NADPH-dependent 7-cyano-7-deazaguanine reductase.